The chain runs to 501 residues: MSSPAQPAVPAPLANLKIQHTKIFINNEWHDSVSSKKFPVLNPATEEVICHVEEGDKADVDKAVKAARQAFQIGSPWRTMDASERGRLLNKLADLMERDRLLLATMESMNAGKVFAHAYLLDVEISIKALQYFAGWADKIHGQTIPSDGNIFTYTRREPIGVCGQIIPWNGPLIIFTWKLGPALSCGNTVVVKPAEQTPLTALHMASLIKEAGFPPGVVNIVPGYGPTAGGAISSHMDIDKVSFTGSTEVGKLIKEAAGKSNLKRVTLELGGKSPCIVFADADLDSAVEFAHQGVFFHQGQICVAASRLFVEESIYDEFVRRSVERAKKYILGNPLNSGINQGPQIDKEQHNKILGLIESGKKEGAKLECGGGRWGNKGFFVQPTVFSNVTDEMRIAKEEIFGPVQQIMKFKSMDDVIKRANNTTYGLAAGVFTKDLDKAITVSSALQAGMVWVNCYLAVPVQCPFGGFKMSGNGRELGEHGLYEYTELKTVAMQISQKNS.

The residue at position 2 (serine 2) is an N-acetylserine. N6-acetyllysine occurs at positions 91 and 128. Glycine 246–glycine 251 serves as a coordination point for NAD(+). The residue at position 252 (lysine 252) is an N6-acetyllysine. The active-site Proton acceptor is glutamate 269. Cysteine 303 functions as the Nucleophile in the catalytic mechanism. N6-acetyllysine is present on residues lysine 353, lysine 367, and lysine 410. A Phosphoserine modification is found at serine 413. N6-acetyllysine is present on residues lysine 419 and lysine 435.

It belongs to the aldehyde dehydrogenase family. As to quaternary structure, homotetramer. As to expression, highest level in liver, high level in lung, low level in kidney and testis.

It is found in the cytoplasm. It carries out the reaction an aldehyde + NAD(+) + H2O = a carboxylate + NADH + 2 H(+). It participates in alcohol metabolism; ethanol degradation; acetate from ethanol: step 2/2. Functionally, can oxidize benzaldehyde, propionaldehyde and acetaldehyde. No detectable activity with retinal. This chain is Aldehyde dehydrogenase, cytosolic 1, found in Mus musculus (Mouse).